A 447-amino-acid polypeptide reads, in one-letter code: Methionine aminopeptidase 2 (447 aa).

A disordered region spans residues 1-86 (MAGATEGEDT…KNKKKKKKKI (86 aa)). The span at 8-32 (EDTKVIESKINELNIDKPKLEDNNE) shows a compositional bias: basic and acidic residues. Residues 43-60 (GGDDDDDKEDDDDNDEIT) show a composition bias toward acidic residues. The segment covering 71-86 (KKKKKNKNKKKKKKKI) has biased composition (basic residues). Residue histidine 198 participates in substrate binding. Residues aspartate 218, aspartate 229, and histidine 300 each coordinate a divalent metal cation. Histidine 308 contacts substrate. A divalent metal cation is bound by residues glutamate 333 and glutamate 428.

Belongs to the peptidase M24A family. Methionine aminopeptidase eukaryotic type 2 subfamily. The cofactor is Co(2+). It depends on Zn(2+) as a cofactor. Mn(2+) is required as a cofactor. Fe(2+) serves as cofactor.

The protein localises to the cytoplasm. It catalyses the reaction Release of N-terminal amino acids, preferentially methionine, from peptides and arylamides.. Its function is as follows. Cotranslationally removes the N-terminal methionine from nascent proteins. The N-terminal methionine is often cleaved when the second residue in the primary sequence is small and uncharged (Met-Ala-, Cys, Gly, Pro, Ser, Thr, or Val). In Candida albicans (strain WO-1) (Yeast), this protein is Methionine aminopeptidase 2.